Consider the following 436-residue polypeptide: Putative ankyrin repeat protein FPV026 (436 aa).

6 ANK repeats span residues 63-92, 101-130, 135-164, 168-197, 201-230, and 234-266; these read EGIRVLRMAIKFERIDIIKILLEYGVNVNE, TCYSVLHFAVDIGNKDIVSILLYAGADVNN, LRNTPLHLAIQQKNTDIAKLLLDSGADQNI, NGNIPIQIAVTYNDEKMVNILLQYSPNLEI, NGRTVLHNAVLDKNINIVSLLLENGALVDS, and EGYTILLSSVNRTDPFIIKMLLHRGANPFFLNI. Residues 409 to 436 form the F-box domain; sequence TSTITNLPYEVIYIIVEKMTNKELCEIR.

The polypeptide is Putative ankyrin repeat protein FPV026 (Fowlpox virus (strain NVSL) (FPV)).